The chain runs to 409 residues: MVLTPRQKEELNKAIADYLHQCGFEDTLNAFKQDANMPGELDKKYTGLLEKKWTSVIRLQKKVMDLETRLSEAEKEVHHGGGPKKTRSPEDWIPRPPERYTLTGHRSPITKVLFHPVYSVMVTSSEDATVKVWDYETGDFERTLKGHTDAVQDLAFDHTGKFLASSSADMTIKLWDFQGFECIRTLHGHDHNVSSISFLPSGDHLVSASRDKTIKMWEIATGYCVKTFQGHGEWVRRVRPNADGSLIASCSNDQTIRVWVVASRECKCDLRDHDHVIEDLNWAPESATPVINEAAGVEGGKKAMSPGPFLVSASRDKSIKIWDVSAGVCLVTLVGHDNWVRAVMFHPGGKFIVSCSDDKTLRIWDYKNKRCAKTLVAHEHFVTTLDFHKSAPFVATGSVDLTLKVWECR.

The 33-residue stretch at Gln7–Gly39 folds into the LisH domain. Residues Thr54–Gly80 adopt a coiled-coil conformation. Residues Glu72–Arg95 form a disordered region. WD repeat units lie at residues Gly104–Lys145, Gly146–His187, Gly188–Gln229, His231–Asp269, Asp272–Thr332, Gly335–Thr374, and Ala377–Arg409.

This sequence belongs to the WD repeat LIS1/nudF family.

It is found in the cytoplasm. It localises to the cytoskeleton. The protein resides in the microtubule organizing center. The protein localises to the centrosome. Its function is as follows. Positively regulates the activity of the minus-end directed microtubule motor protein dynein. May enhance dynein-mediated microtubule sliding by targeting dynein to the microtubule plus end. Required for several dynein- and microtubule-dependent processes. This is Lissencephaly-1 homolog from Nematostella vectensis (Starlet sea anemone).